The sequence spans 129 residues: Small ribosomal subunit protein uS11 (129 aa).

This sequence belongs to the universal ribosomal protein uS11 family. As to quaternary structure, part of the 30S ribosomal subunit. Interacts with proteins S7 and S18. Binds to IF-3.

In terms of biological role, located on the platform of the 30S subunit, it bridges several disparate RNA helices of the 16S rRNA. Forms part of the Shine-Dalgarno cleft in the 70S ribosome. This Phocaeicola vulgatus (strain ATCC 8482 / DSM 1447 / JCM 5826 / CCUG 4940 / NBRC 14291 / NCTC 11154) (Bacteroides vulgatus) protein is Small ribosomal subunit protein uS11.